Consider the following 254-residue polypeptide: 14-3-3-like protein RA215 (254 aa).

Belongs to the 14-3-3 family.

This Solanum tuberosum (Potato) protein is 14-3-3-like protein RA215.